We begin with the raw amino-acid sequence, 559 residues long: Formate--tetrahydrofolate ligase (559 aa).

68–75 (TPAGEGKS) is an ATP binding site.

It belongs to the formate--tetrahydrofolate ligase family.

The enzyme catalyses (6S)-5,6,7,8-tetrahydrofolate + formate + ATP = (6R)-10-formyltetrahydrofolate + ADP + phosphate. It participates in one-carbon metabolism; tetrahydrofolate interconversion. This Bacillus licheniformis (strain ATCC 14580 / DSM 13 / JCM 2505 / CCUG 7422 / NBRC 12200 / NCIMB 9375 / NCTC 10341 / NRRL NRS-1264 / Gibson 46) protein is Formate--tetrahydrofolate ligase.